We begin with the raw amino-acid sequence, 64 residues long: Putative neurotoxin 6 (64 aa).

The N-terminal stretch at 1 to 24 (MKNKFAALVITLFVLVLAIDNVTT) is a signal peptide.

The protein belongs to the scolopendra neurotoxin 6 family. In terms of processing, contains 3 disulfide bonds. Expressed by the venom gland.

The protein localises to the secreted. This Scolopendra mutilans (Chinese red-headed centipede) protein is Putative neurotoxin 6.